The chain runs to 424 residues: PtdIns3K complex I subunit atg38 (424 aa).

The stretch at 50-78 (LIKRCANNQIEELMVRIRELRESLPNKQT) forms a coiled coil. Residues 73–212 (LPNKQTPISM…DPAYQNTNEQ (140 aa)) are required for interaction with atg8. The AIM motif lies at 178-181 (FLIV). Over residues 268-284 (LSEEEMGRSHKREESFK) the composition is skewed to basic and acidic residues. Residues 268-299 (LSEEEMGRSHKREESFKRAFGHASSSESSIGE) form a disordered region. Residues 390–420 (TVDSQLKIKQLETQIATLQKQLEQFQTSTLD) are a coiled coil.

It belongs to the ATG38 family. Component of the autophagy-specific vps34 PI3-kinase complex I composed of vps15, atg6, pik3/vps34, atg14 and atg38. Interacts (via AIM motif) with atg8; the interaction is direct and leads to recruitment of the autophagy-specific vps34 PI3-kinase complex I to the phagophore assembly site.

Its subcellular location is the preautophagosomal structure membrane. It is found in the cytoplasm. The protein resides in the cytosol. Functionally, functions as a part of the autophagy-specific VPS34 PI3-kinase complex I that plays a role in autophagosome assembly. This complex is essential to recruit the atg8-phosphatidylinositol conjugate and the atg12-atg5 conjugate to the pre-autophagosomal structure. By binding to atg8 at the phagophore assembly site, atg38 helps establish a positive feedback loop for recruitment of phagophore assembly proteins, including atg8. This chain is PtdIns3K complex I subunit atg38, found in Schizosaccharomyces pombe (strain 972 / ATCC 24843) (Fission yeast).